The sequence spans 203 residues: Dephospho-CoA kinase (203 aa).

The DPCK domain occupies 3–201 (SVGLTGGIGS…QRYLECAAAA (199 aa)). 11–16 (GSGKTT) is a binding site for ATP.

Belongs to the CoaE family.

It localises to the cytoplasm. It catalyses the reaction 3'-dephospho-CoA + ATP = ADP + CoA + H(+). The protein operates within cofactor biosynthesis; coenzyme A biosynthesis; CoA from (R)-pantothenate: step 5/5. Catalyzes the phosphorylation of the 3'-hydroxyl group of dephosphocoenzyme A to form coenzyme A. The sequence is that of Dephospho-CoA kinase from Burkholderia pseudomallei (strain 1710b).